We begin with the raw amino-acid sequence, 212 residues long: ATP phosphoribosyltransferase (212 aa).

This sequence belongs to the ATP phosphoribosyltransferase family. Short subfamily. Heteromultimer composed of HisG and HisZ subunits.

Its subcellular location is the cytoplasm. It carries out the reaction 1-(5-phospho-beta-D-ribosyl)-ATP + diphosphate = 5-phospho-alpha-D-ribose 1-diphosphate + ATP. The protein operates within amino-acid biosynthesis; L-histidine biosynthesis; L-histidine from 5-phospho-alpha-D-ribose 1-diphosphate: step 1/9. Its function is as follows. Catalyzes the condensation of ATP and 5-phosphoribose 1-diphosphate to form N'-(5'-phosphoribosyl)-ATP (PR-ATP). Has a crucial role in the pathway because the rate of histidine biosynthesis seems to be controlled primarily by regulation of HisG enzymatic activity. This Albidiferax ferrireducens (strain ATCC BAA-621 / DSM 15236 / T118) (Rhodoferax ferrireducens) protein is ATP phosphoribosyltransferase.